Here is a 240-residue protein sequence, read N- to C-terminus: E3 ubiquitin-protein ligase LubX (240 aa).

2 consecutive U-box domains span residues 30–103 (TTPT…QTNY) and 125–198 (EIPD…RKRE).

Post-translationally, ubiquitinated in the presence of host E1 ubiquitin-activating enzyme, E2 ubiquitin-conjugating enzyme and ubiquitin.

It is found in the secreted. Its subcellular location is the host cell. It carries out the reaction S-ubiquitinyl-[E2 ubiquitin-conjugating enzyme]-L-cysteine + [acceptor protein]-L-lysine = [E2 ubiquitin-conjugating enzyme]-L-cysteine + N(6)-ubiquitinyl-[acceptor protein]-L-lysine.. Effector proteins function to alter host cell physiology and promote bacterial survival in host tissues. This protein is an E3 ubiquitin ligase that interferes with host's ubiquitination pathway. This Legionella pneumophila (strain Paris) protein is E3 ubiquitin-protein ligase LubX (lubX).